Here is a 92-residue protein sequence, read N- to C-terminus: Enhancer of yellow 2 transcription factor (92 aa).

Belongs to the ENY2 family. As to quaternary structure, component of the nuclear pore complex (NPC)-associated TREX-2 complex (transcription and export complex 2). Component of the SAGA transcription coactivator-HAT complex. Within the SAGA complex, participates in a subcomplex of SAGA called the DUB module (deubiquitination module).

It is found in the nucleus. Its subcellular location is the nucleoplasm. Involved in mRNA export coupled transcription activation by association with both the TREX-2 and the SAGA complexes. The transcription regulatory histone acetylation (HAT) complex SAGA is a multiprotein complex that activates transcription by remodeling chromatin and mediating histone acetylation and deubiquitination. Within the SAGA complex, participates in a subcomplex that specifically deubiquitinates histones. The SAGA complex is recruited to specific gene promoters by activators, where it is required for transcription. The TREX-2 complex functions in docking export-competent ribonucleoprotein particles (mRNPs) to the nuclear entrance of the nuclear pore complex (nuclear basket). TREX-2 participates in mRNA export and accurate chromatin positioning in the nucleus by tethering genes to the nuclear periphery. The chain is Enhancer of yellow 2 transcription factor from Aedes aegypti (Yellowfever mosquito).